Reading from the N-terminus, the 149-residue chain is Large ribosomal subunit protein uL13 (149 aa).

Belongs to the universal ribosomal protein uL13 family. As to quaternary structure, part of the 50S ribosomal subunit.

Its function is as follows. This protein is one of the early assembly proteins of the 50S ribosomal subunit, although it is not seen to bind rRNA by itself. It is important during the early stages of 50S assembly. This chain is Large ribosomal subunit protein uL13, found in Chlorobium luteolum (strain DSM 273 / BCRC 81028 / 2530) (Pelodictyon luteolum).